The following is a 327-amino-acid chain: Tagatose 1,6-diphosphate aldolase 2 (327 aa).

It belongs to the aldolase LacD family.

It carries out the reaction D-tagatofuranose 1,6-bisphosphate = D-glyceraldehyde 3-phosphate + dihydroxyacetone phosphate. It participates in carbohydrate metabolism; D-tagatose 6-phosphate degradation; D-glyceraldehyde 3-phosphate and glycerone phosphate from D-tagatose 6-phosphate: step 2/2. This chain is Tagatose 1,6-diphosphate aldolase 2 (lacD2), found in Streptococcus pyogenes serotype M3 (strain ATCC BAA-595 / MGAS315).